A 264-amino-acid chain; its full sequence is Ribosomal RNA small subunit methyltransferase A (264 aa).

The S-adenosyl-L-methionine site is built by Asn-12, Leu-14, Gly-39, Glu-60, Asp-83, and Asn-103.

The protein belongs to the class I-like SAM-binding methyltransferase superfamily. rRNA adenine N(6)-methyltransferase family. RsmA subfamily.

The protein localises to the cytoplasm. It carries out the reaction adenosine(1518)/adenosine(1519) in 16S rRNA + 4 S-adenosyl-L-methionine = N(6)-dimethyladenosine(1518)/N(6)-dimethyladenosine(1519) in 16S rRNA + 4 S-adenosyl-L-homocysteine + 4 H(+). In terms of biological role, specifically dimethylates two adjacent adenosines (A1518 and A1519) in the loop of a conserved hairpin near the 3'-end of 16S rRNA in the 30S particle. May play a critical role in biogenesis of 30S subunits. The polypeptide is Ribosomal RNA small subunit methyltransferase A (Syntrophotalea carbinolica (strain DSM 2380 / NBRC 103641 / GraBd1) (Pelobacter carbinolicus)).